A 177-amino-acid polypeptide reads, in one-letter code: FMRFamide-related peptides (177 aa).

A signal peptide spans 1-21; sequence MNHPRSIAMLAALWLVVSVTS. Residues 22–32 constitute a propeptide that is removed on maturation; the sequence is TPVRRSPDLEA. F45 is subject to Phenylalanine amide. The propeptide occupies 47-93; it reads RSTLPVVPPAQPSFLQRYSAPQPAALTADDLMTFLRAYEEDYSSPVS. Phenylalanine amide occurs at positions 102 and 111. Residues 113-131 constitute a propeptide that is removed on maturation; the sequence is RSVDEENSGYQAETNTYPQ. At L143 the chain carries Leucine amide. Residues 145-177 constitute a propeptide that is removed on maturation; it reads RDNELSESNDEDRYEVESERTKRSVVDPCNDCA. Residues 145–177 form a disordered region; sequence RDNELSESNDEDRYEVESERTKRSVVDPCNDCA. A compositionally biased stretch (acidic residues) spans 149-158; sequence LSESNDEDRY. The segment covering 159–169 has biased composition (basic and acidic residues); sequence EVESERTKRSV.

It belongs to the FARP (FMRFamide related peptide) family. In terms of tissue distribution, only expressed in the CNS and predominantly in the thoracic ganglia. Strongest expression is seen in two pairs of large neurons in each thoracic ganglion. These neurons are ventrolateral neurosecretory cells 1 and 2, they project their axons through transverse nerves into the periphery where axons from the prothoracic ganglion innervate the prothoracic gland.

It localises to the secreted. In terms of biological role, regulates ecdysteroidogenesis by direct innervation of the prothoracic gland by reducing cAMP production via the receptor for myosuppressin. The neurons that innervate the prothoracic gland during the fifth instar are most active during days 0-4, after which they reduce and then peak again on day 6. Expression suppresses the biosynthesis of steroid hormones called ecdysteroids that elicit molting and metamorphosis. The chain is FMRFamide-related peptides from Bombyx mori (Silk moth).